A 457-amino-acid polypeptide reads, in one-letter code: uncharacterized protein (457 aa).

One can recognise a TRAM domain in the interval 5 to 63; it reads PVKKNDVIEVEIIDLTHEGLGVAKVDHYPLFIENALPGEKLEIKVLKTGKSFGYGKVLT. Glutamine 287, tyrosine 316, glutamate 337, and aspartate 385 together coordinate S-adenosyl-L-methionine. Catalysis depends on cysteine 412, which acts as the Nucleophile.

Belongs to the class I-like SAM-binding methyltransferase superfamily. RNA M5U methyltransferase family.

This is an uncharacterized protein from Enterococcus faecalis (strain ATCC 700802 / V583).